The primary structure comprises 156 residues: IFN signaling evasion protein OPG029 (156 aa).

This sequence belongs to the orthopoxvirus OPG029 family. Interacts with host TANK, TBKBP1 and AZI2; these interactions prevent interferon production. Interacts with host STAT2.

Functionally, prevents establishment of cellular antiviral state by blocking virus-induced phosphorylation and activation of interferon regulatory factors 3/IRF3 and 7/IRF7, transcription factors critical for the induction of interferons alpha and beta. This blockage is produced through the inhibition of host TBK1, by binding host TBK1 adapter proteins TBKBP1 and AZI2, thereby producing a strong inhibition of the phosphorylation and activation of IRF3 and IRF7. Also acts as an inhibitor of the cellular response to type I IFN by interacting with host STAT2. Mechanistically, exerts its inhibitory effect after host ISGF3 complex (composed of STAT1, STAT2 and IRF9) binding to the interferon stimulated response element (ISRE). In Variola virus (isolate Human/India/Ind3/1967) (VARV), this protein is IFN signaling evasion protein OPG029 (OPG029).